A 22-amino-acid polypeptide reads, in one-letter code: Chymotrypsin inhibitor (22 aa).

The tract at residues 1–22 is disordered; sequence FDESFGFQGPSTYEKTPLGEPA.

In terms of tissue distribution, hemolymph.

Its subcellular location is the secreted. The protein localises to the extracellular space. In terms of biological role, inhibits chymotrypsin stoichiometrically. Also inhibits porcine pancreatic elastase and trypsin. The sequence is that of Chymotrypsin inhibitor from Mythimna unipuncta (Armyworm moth).